We begin with the raw amino-acid sequence, 278 residues long: Energy-coupling factor transporter ATP-binding protein EcfA1 (278 aa).

The region spanning 5 to 240 (IEVRNLKYKY…EDLEELGLDQ (236 aa)) is the ABC transporter domain. 40-47 (GHNGSGKS) provides a ligand contact to ATP.

This sequence belongs to the ABC transporter superfamily. Energy-coupling factor EcfA family. As to quaternary structure, forms a stable energy-coupling factor (ECF) transporter complex composed of 2 membrane-embedded substrate-binding proteins (S component), 2 ATP-binding proteins (A component) and 2 transmembrane proteins (T component).

The protein resides in the cell membrane. Functionally, ATP-binding (A) component of a common energy-coupling factor (ECF) ABC-transporter complex. Unlike classic ABC transporters this ECF transporter provides the energy necessary to transport a number of different substrates. This is Energy-coupling factor transporter ATP-binding protein EcfA1 from Streptococcus sanguinis (strain SK36).